The chain runs to 96 residues: Large ribosomal subunit protein bL28 (96 aa).

The disordered stretch occupies residues 1-23 (MSRVCELSGKAPMTGNTVSHANN).

Belongs to the bacterial ribosomal protein bL28 family.

The sequence is that of Large ribosomal subunit protein bL28 from Cereibacter sphaeroides (strain ATCC 17025 / ATH 2.4.3) (Rhodobacter sphaeroides).